A 635-amino-acid chain; its full sequence is Sodium- and chloride-dependent creatine transporter 1 (635 aa).

The tract at residues 1–27 (MAKKSAENGIYSVSGDEKKGPLIVSGP) is disordered. Topologically, residues 1-60 (MAKKSAENGIYSVSGDEKKGPLIVSGPDGAPAKGDGPAGLGAPGGRLAVPPRETWTRQMD) are cytoplasmic. The helical transmembrane segment at 61 to 81 (FIMSCVGFAVGLGNVWRFPYL) threads the bilayer. At 82–87 (CYKNGG) the chain is on the extracellular side. A helical membrane pass occupies residues 88–108 (GVFLIPYVLIALVGGIPIFFL). The Cytoplasmic portion of the chain corresponds to 109–138 (EISLGQFMKAGSINVWNICPLFKGLGYASM). A helical membrane pass occupies residues 139–159 (VIVFYCNTYYIMVLAWGFYYL). At 160–230 (VKSFTTTLPW…LSTGLEVPGA (71 aa)) the chain is on the extracellular side. Residues Asn192 and Asn197 are each glycosylated (N-linked (GlcNAc...) asparagine). A helical transmembrane segment spans residues 231-251 (LNWEVTLCLLACWVLVYFCVW). Over 252–269 (KGVKSTGKIVYFTATFPY) the chain is Cytoplasmic. Residues 270–290 (VVLVVLLVRGVLLPGALDGII) traverse the membrane as a helical segment. Residues 291–304 (YYLKPDWSKLGSPQ) lie on the Extracellular side of the membrane. Residues 305-325 (VWIDAGTQIFFSYAIGLGALT) form a helical membrane-spanning segment. Residues 326–341 (ALGSYNRFNNNCYKDA) lie on the Cytoplasmic side of the membrane. A helical membrane pass occupies residues 342–362 (IILALINSGTSFFAGFVVFSI). Over 363 to 394 (LGFMATEQGVHISKVAESGPGLAFIAYPRAVT) the chain is Extracellular. A helical transmembrane segment spans residues 395–415 (LMPVAPLWAALFFFMLLLLGL). The Cytoplasmic segment spans residues 416-444 (DSQFVGVEGFITGLLDLLPASYYFRFQRE). A helical membrane pass occupies residues 445–465 (ISVALCCALCFVIDLSMVTDG). At 466-479 (GMYVFQLFDYYSAS) the chain is on the extracellular side. The helical transmembrane segment at 480 to 500 (GTTLLWQAFWECVVVAWVYGA) threads the bilayer. Residues 501–520 (DRFMDDIACMIGYRPCPWMK) lie on the Cytoplasmic side of the membrane. The helical transmembrane segment at 521–541 (WCWSFFTPLVCMGIFIFNIVY) threads the bilayer. Topologically, residues 542–560 (YEPLVYNNTYVYPWWGEAM) are extracellular. N-linked (GlcNAc...) asparagine glycosylation is present at Asn548. Residues 561–581 (GWAFALSSMLCVPLHLLGCLL) traverse the membrane as a helical segment. Over 582–635 (RAKGTMAERWQHLTQPIWGLHHLEYRAQDADVRGLTTLTPVSESSKVVVVESVM) the chain is Cytoplasmic. Phosphothreonine is present on residues Thr617 and Thr620. At Ser623 the chain carries Phosphoserine.

The protein belongs to the sodium:neurotransmitter symporter (SNF) (TC 2.A.22) family. SLC6A8 subfamily. Post-translationally, glycosylated. As to expression, brain. Highly expressed in brain capillaries branching in all cortical layers and moderately expressed in neuronal perikarya (at protein level).

It is found in the cell membrane. The protein resides in the apical cell membrane. It catalyses the reaction creatine(out) + chloride(out) + 2 Na(+)(out) = creatine(in) + chloride(in) + 2 Na(+)(in). Its function is as follows. Creatine:sodium symporter which mediates the uptake of creatine. Plays an important role in supplying creatine to the brain via the blood-brain barrier. In Mus musculus (Mouse), this protein is Sodium- and chloride-dependent creatine transporter 1 (Slc6a8).